Reading from the N-terminus, the 386-residue chain is Nucleosome assembly protein 1-like 4 (386 aa).

The tract at residues 1 to 28 (MAENSLSDGGPADSVEAAKNASNTEKLT) is disordered. Position 2 is an N-acetylalanine (Ala-2). Residues Ser-5, Ser-7, and Ser-49 each carry the phosphoserine modification. Thr-51 carries the phosphothreonine modification. 2 positions are modified to phosphoserine: Ser-53 and Ser-54. Thr-58 carries the phosphothreonine modification. Lys-105 is modified (N6-acetyllysine). Ser-125 is subject to Phosphoserine. Residue Lys-146 is modified to N6-acetyllysine. The Nuclear localization signal motif lies at 265 to 271 (IKKKQKH). The residue at position 304 (Ser-304) is a Phosphoserine. The span at 339 to 370 (AIEDDDNFEEGEEGEEEELEGDEEGEDEDDAD) shows a compositional bias: acidic residues. Positions 339 to 386 (AIEDDDNFEEGEEGEEEELEGDEEGEDEDDADVNPKKEPIQPAECKQQ) are disordered.

Belongs to the nucleosome assembly protein (NAP) family. Interacts with core (H2A, H2B, H3, H4) and linker (H1) histones. Polyglutamylated and polyglycylated. These 2 modifications occur exclusively on glutamate residues and result in either polyglutamate or polyglycine chains on the gamma-carboxyl group. Both modifications can coexist on the same protein on adjacent residues, and lowering polyglycylation levels increases polyglutamylation, and reciprocally. Polyglutamylated by TTLL4. Post-translationally, phosphorylated at the G0/G1 boundary but it is not phosphorylated in S-phase. Phosphorylated protein remains in the cytoplasm in a complex with histones during the G0/G1 transition, whereas dephosphorylation triggers its transport into the nucleus at the G1/S-boundary.

It is found in the nucleus. The protein resides in the cytoplasm. Acts as a histone chaperone in nucleosome assembly. The protein is Nucleosome assembly protein 1-like 4 (Nap1l4) of Rattus norvegicus (Rat).